A 691-amino-acid polypeptide reads, in one-letter code: Homeobox protein NOBOX (691 aa).

The segment covering 94 to 103 (ELTRGQKAGE) has biased composition (basic and acidic residues). Residues 94–233 (ELTRGQKAGE…NSARATHNPV (140 aa)) form a disordered region. Positions 216–228 (PTSSPGAPNSARA) are enriched in polar residues. Residues 272–363 (RKKTRTLYRS…NRRAKWRKME (92 aa)) constitute a DNA-binding region (homeobox). Disordered regions lie at residues 366-385 (NGKE…SQCS), 394-437 (VPME…AQRV), and 635-691 (QALG…SHVP). The span at 395–405 (PMEPKPDPFPQ) shows a compositional bias: pro residues. Residues 420–432 (TSDQTLAPTQPSE) show a composition bias toward polar residues. Residues 679–691 (EEARGDDKNSHVP) show a composition bias toward basic and acidic residues.

As to expression, expressed in ovaries, testes and pancreas. Expressed within all stages of the adult female germline, from primordial follicles through to MII oocytes.

The protein localises to the nucleus. In terms of biological role, transcription factor which may play a role in oogenesis. Binds preferentially to the DNA sequences 5'-TAATTG-3', 5'-TAGTTG-3' and 5'-TAATTA-3'. This chain is Homeobox protein NOBOX (NOBOX), found in Homo sapiens (Human).